The primary structure comprises 818 residues: Histone H2A deubiquitinase MYSM1 (818 aa).

Residues 107-158 (SSPVKWTKEEKNLFEQGLATFGRRWTSIARLIGSRSVLQVKNYARHYFKNKC) form the SANT domain. The SWIRM domain maps to 344 to 442 (IKPPDQELEI…FGCEQAIYNR (99 aa)). The region spanning 548–680 (VKVSCEAMLV…PHPQSQVACL (133 aa)) is the MPN domain. The Zn(2+) site is built by H627, H629, and D640. Residues 627-640 (HSHPAFDPNPSIRD) carry the JAMM motif motif. Residues 745 to 749 (LQKLL) carry the LXXLL motif motif.

Belongs to the peptidase M67A family. MYSM1 subfamily.

The protein localises to the nucleus. In terms of biological role, metalloprotease that specifically deubiquitinates monoubiquitinated histone H2A, a specific tag for epigenetic transcriptional repression, thereby acting as a coactivator. Preferentially deubiquitinates monoubiquitinated H2A in hyperacetylated nucleosomes. Deubiquitination of histone H2A leads to facilitate the phosphorylation and dissociation of histone H1 from the nucleosome. Acts as a coactivator by participating in the initiation and elongation steps of androgen receptor (AR)-induced gene activation. This Xenopus laevis (African clawed frog) protein is Histone H2A deubiquitinase MYSM1 (mysm1).